Reading from the N-terminus, the 735-residue chain is Rho GTPase-activating protein SYDE1 (735 aa).

Disordered regions lie at residues 1 to 253 (MAEP…PYEV), 601 to 655 (PDTR…AGDW), and 669 to 706 (FLSG…FDAP). Positions 14 to 47 (RGREKLPRKKSDAKDRGRPAQRSEPKPPEPEPRV) are enriched in basic and acidic residues. Low complexity predominate over residues 151–160 (PTKTSRTKSP). Ser224, Ser231, Ser235, and Ser244 each carry phosphoserine. The 118-residue stretch at 249 to 366 (RPYEVGPSAR…FRGCQAQQLA (118 aa)) folds into the C2 domain. The region spanning 398–604 (LPLQLLVERE…YLLQSWPDTR (207 aa)) is the Rho-GAP domain. Over residues 669–679 (FLSGPDYDHVT) the composition is skewed to basic and acidic residues. Phosphoserine is present on residues Ser681 and Ser683.

Post-translationally, palmitoylated. Probably palmitoylated by ZDHHC3 and ZDHHC7.

In terms of biological role, GTPase activator for the Rho-type GTPases. As a GCM1 downstream effector, it is involved in placental development and positively regulates trophoblast cells migration. It regulates cytoskeletal remodeling by controlling the activity of Rho GTPases including RHOA, CDC42 and RAC1. The sequence is that of Rho GTPase-activating protein SYDE1 (Syde1) from Rattus norvegicus (Rat).